The sequence spans 366 residues: Mitochondrial division protein fszB (366 aa).

GTP is bound by residues 70 to 74, 157 to 159, Glu-190, and Asp-238; these read GGGGN and GTG.

It belongs to the FtsZ family.

Its subcellular location is the mitochondrion. In terms of biological role, probably involved in mitochondrion division process. Binds to and hydrolyzes GTP. The polypeptide is Mitochondrial division protein fszB (fszB) (Dictyostelium discoideum (Social amoeba)).